The sequence spans 309 residues: UDP-N-acetylenolpyruvoylglucosamine reductase (309 aa).

In terms of domain architecture, FAD-binding PCMH-type spans 40 to 204; it reads LGGKVPLFAI…LQATFKLKKG (165 aa). Residue arginine 182 is part of the active site. Serine 233 acts as the Proton donor in catalysis. Glutamate 304 is a catalytic residue.

Belongs to the MurB family. The cofactor is FAD.

It is found in the cytoplasm. It catalyses the reaction UDP-N-acetyl-alpha-D-muramate + NADP(+) = UDP-N-acetyl-3-O-(1-carboxyvinyl)-alpha-D-glucosamine + NADPH + H(+). Its pathway is cell wall biogenesis; peptidoglycan biosynthesis. Cell wall formation. The sequence is that of UDP-N-acetylenolpyruvoylglucosamine reductase from Fervidobacterium nodosum (strain ATCC 35602 / DSM 5306 / Rt17-B1).